Reading from the N-terminus, the 339-residue chain is UDP-N-acetylenolpyruvoylglucosamine reductase (339 aa).

The region spanning 19 to 189 (VDVRAQLFAE…LRVRFALNRV (171 aa)) is the FAD-binding PCMH-type domain. Residue Arg-166 is part of the active site. Ser-239 acts as the Proton donor in catalysis. Residue Glu-335 is part of the active site.

Belongs to the MurB family. FAD is required as a cofactor.

The protein resides in the cytoplasm. The catalysed reaction is UDP-N-acetyl-alpha-D-muramate + NADP(+) = UDP-N-acetyl-3-O-(1-carboxyvinyl)-alpha-D-glucosamine + NADPH + H(+). The protein operates within cell wall biogenesis; peptidoglycan biosynthesis. Functionally, cell wall formation. This Pseudomonas fluorescens (strain Pf0-1) protein is UDP-N-acetylenolpyruvoylglucosamine reductase.